We begin with the raw amino-acid sequence, 161 residues long: Phosphopantetheine adenylyltransferase (161 aa).

Serine 10 lines the substrate pocket. ATP-binding positions include 10–11 and histidine 18; that span reads SF. The substrate site is built by lysine 42, alanine 75, and arginine 89. ATP-binding positions include 90-92, glutamate 100, and 125-131; these read GLR and LSPISSS.

Belongs to the bacterial CoaD family. In terms of assembly, homohexamer. Requires Mg(2+) as cofactor.

It localises to the cytoplasm. The catalysed reaction is (R)-4'-phosphopantetheine + ATP + H(+) = 3'-dephospho-CoA + diphosphate. It participates in cofactor biosynthesis; coenzyme A biosynthesis; CoA from (R)-pantothenate: step 4/5. Reversibly transfers an adenylyl group from ATP to 4'-phosphopantetheine, yielding dephospho-CoA (dPCoA) and pyrophosphate. This Streptococcus agalactiae serotype Ia (strain ATCC 27591 / A909 / CDC SS700) protein is Phosphopantetheine adenylyltransferase.